Here is a 648-residue protein sequence, read N- to C-terminus: Actin-related protein 5 (648 aa).

A disordered region spans residues 34-59; sequence LTKPRKDRKKEAAASEGSASQTTVEQ. 2 coiled-coil regions span residues 277-311 and 340-364; these read TAEQKQEKRRELAHRLLDIKKNREQEKLREDEQQL and TLEDLDSLIATINSRIKRAQERAQS. Disordered stretches follow at residues 357-385 and 403-455; these read RAQERAQSGPRPSKQQERLNKMPKPPEGM and GRKQ…GMND. Over residues 414-428 the composition is skewed to basic and acidic residues; sequence EQAKRHTHAAQERMR. Phosphoserine is present on residues Ser-471 and Ser-473.

The protein belongs to the actin family. ARP5 subfamily. Component of the chromatin remodeling Ino80 complex.

It localises to the nucleus. In terms of biological role, proposed core component of the chromatin remodeling Ino80 complex which is involved in transcriptional regulation, DNA replication and probably DNA repair. In Drosophila melanogaster (Fruit fly), this protein is Actin-related protein 5.